A 386-amino-acid chain; its full sequence is MHGRRHLAASLTRALTQAPSRSISSTPSLLQTLDPSVPSPSPPPAAEPGRLAELRRRLQADAPSLGDFAYSVEVGTRQRPLPKPKWMKETVPGGAKYAAIKAKLRELKLHTVCEEARCPNLGECWSGGETGTATATIMILGDTCTRGCRFCNVKTSRTPPPPDPDEPSNVAQAIASWGLEYIVITSVDRDDLPDQGSGHFAETVQKLKALKPEMLIEALVPDFRGDPSCVEKVATSGLHVFAHNIETVEELQRNVRDYRANFKQSIDVLKMAKEYAPPGTLTKTSIMLGCGETPDQVISTMEKVRAAGVDVITFGQYMRPSKRHMPVSEYVTPEAFEKYRALGVEMGFRYVASGPMVRSSYKAGEFYIKAMIEADRSKATTADSSA.

The segment at 1 to 48 (MHGRRHLAASLTRALTQAPSRSISSTPSLLQTLDPSVPSPSPPPAAEP) is disordered. Residues 13 to 34 (RALTQAPSRSISSTPSLLQTLD) show a composition bias toward polar residues. Over residues 37–46 (VPSPSPPPAA) the composition is skewed to pro residues. The [4Fe-4S] cluster site is built by C113, C118, C124, C144, C148, C151, and S360. Residues 129-349 (ETGTATATIM…RALGVEMGFR (221 aa)) enclose the Radical SAM core domain.

Belongs to the radical SAM superfamily. Lipoyl synthase family. [4Fe-4S] cluster is required as a cofactor.

The protein localises to the mitochondrion. It catalyses the reaction [[Fe-S] cluster scaffold protein carrying a second [4Fe-4S](2+) cluster] + N(6)-octanoyl-L-lysyl-[protein] + 2 oxidized [2Fe-2S]-[ferredoxin] + 2 S-adenosyl-L-methionine + 4 H(+) = [[Fe-S] cluster scaffold protein] + N(6)-[(R)-dihydrolipoyl]-L-lysyl-[protein] + 4 Fe(3+) + 2 hydrogen sulfide + 2 5'-deoxyadenosine + 2 L-methionine + 2 reduced [2Fe-2S]-[ferredoxin]. It participates in protein modification; protein lipoylation via endogenous pathway; protein N(6)-(lipoyl)lysine from octanoyl-[acyl-carrier-protein]: step 2/2. Functionally, catalyzes the radical-mediated insertion of two sulfur atoms into the C-6 and C-8 positions of the octanoyl moiety bound to the lipoyl domains of lipoate-dependent enzymes, thereby converting the octanoylated domains into lipoylated derivatives. The protein is Lipoyl synthase, mitochondrial of Sorghum bicolor (Sorghum).